The following is a 335-amino-acid chain: Erlin-2-A (335 aa).

The Cytoplasmic portion of the chain corresponds to 1 to 2 (MS). A helical transmembrane segment spans residues 3-23 (HAGAIVGLGVALIAAALFSAI). Residues 24-335 (HKIEEGHVGV…GLDEAASAEE (312 aa)) are Lumenal-facing. N-linked (GlcNAc...) asparagine glycosylation is present at Asn-106.

The protein belongs to the band 7/mec-2 family.

It localises to the endoplasmic reticulum membrane. In terms of biological role, mediates the endoplasmic reticulum-associated degradation (ERAD) of inositol 1,4,5-trisphosphate receptors (IP3Rs). Promotes sterol-accelerated ERAD of HMGCR. Involved in regulation of cellular cholesterol homeostasis by regulation the SREBP signaling pathway. The sequence is that of Erlin-2-A (erlin2-a) from Xenopus laevis (African clawed frog).